Reading from the N-terminus, the 549-residue chain is Dihydroxy-acid dehydratase (549 aa).

Aspartate 78 is a Mg(2+) binding site. A [2Fe-2S] cluster-binding site is contributed by cysteine 119. The Mg(2+) site is built by aspartate 120 and lysine 121. Position 121 is an N6-carboxylysine (lysine 121). Cysteine 191 is a [2Fe-2S] cluster binding site. Glutamate 441 is a Mg(2+) binding site. The active-site Proton acceptor is serine 466.

This sequence belongs to the IlvD/Edd family. As to quaternary structure, homodimer. [2Fe-2S] cluster is required as a cofactor. It depends on Mg(2+) as a cofactor.

The catalysed reaction is (2R)-2,3-dihydroxy-3-methylbutanoate = 3-methyl-2-oxobutanoate + H2O. The enzyme catalyses (2R,3R)-2,3-dihydroxy-3-methylpentanoate = (S)-3-methyl-2-oxopentanoate + H2O. It participates in amino-acid biosynthesis; L-isoleucine biosynthesis; L-isoleucine from 2-oxobutanoate: step 3/4. The protein operates within amino-acid biosynthesis; L-valine biosynthesis; L-valine from pyruvate: step 3/4. Functionally, functions in the biosynthesis of branched-chain amino acids. Catalyzes the dehydration of (2R,3R)-2,3-dihydroxy-3-methylpentanoate (2,3-dihydroxy-3-methylvalerate) into 2-oxo-3-methylpentanoate (2-oxo-3-methylvalerate) and of (2R)-2,3-dihydroxy-3-methylbutanoate (2,3-dihydroxyisovalerate) into 2-oxo-3-methylbutanoate (2-oxoisovalerate), the penultimate precursor to L-isoleucine and L-valine, respectively. The protein is Dihydroxy-acid dehydratase of Methanosphaera stadtmanae (strain ATCC 43021 / DSM 3091 / JCM 11832 / MCB-3).